We begin with the raw amino-acid sequence, 105 residues long: Thioredoxin (105 aa).

The 105-residue stretch at 1–105 folds into the Thioredoxin domain; sequence MANNVTDSSF…SLLDWINKSI (105 aa). A disulfide bond links cysteine 30 and cysteine 33.

It belongs to the thioredoxin family.

Component of the thioredoxin-thioredoxin reductase system. Participates in various redox reactions through the reversible oxidation of its active center dithiol to a disulfide and catalyzes dithiol-disulfide exchange reactions. The protein is Thioredoxin (trxA) of Rickettsia felis (strain ATCC VR-1525 / URRWXCal2) (Rickettsia azadi).